Here is a 538-residue protein sequence, read N- to C-terminus: ATP-dependent rRNA helicase RRP3 (538 aa).

The segment covering methionine 1–histidine 11 has biased composition (basic residues). The segment at methionine 1 to phenylalanine 112 is disordered. Positions lysine 34–lysine 47 are enriched in low complexity. A compositionally biased stretch (acidic residues) spans alanine 53–aspartate 85. Positions glutamate 92–phenylalanine 112 are enriched in basic and acidic residues. Positions lysine 110–glutamate 138 match the Q motif motif. The Helicase ATP-binding domain occupies isoleucine 141–valine 312. Residue alanine 154–threonine 161 participates in ATP binding. The short motif at aspartate 260–aspartate 263 is the DEAD box element. Positions histidine 336–methionine 486 constitute a Helicase C-terminal domain. Basic and acidic residues predominate over residues histidine 498–lysine 512. The tract at residues histidine 498–glycine 538 is disordered. Over residues lysine 513 to arginine 528 the composition is skewed to basic residues.

The protein belongs to the DEAD box helicase family. DDX47/RRP3 subfamily. Interacts with the SSU processome.

It localises to the nucleus. It catalyses the reaction ATP + H2O = ADP + phosphate + H(+). Functionally, ATP-dependent rRNA helicase required for pre-ribosomal RNA processing. Involved in the maturation of the 35S-pre-rRNA and to its cleavage to mature 18S rRNA. This chain is ATP-dependent rRNA helicase RRP3, found in Pyricularia oryzae (strain 70-15 / ATCC MYA-4617 / FGSC 8958) (Rice blast fungus).